The sequence spans 195 residues: Imidazoleglycerol-phosphate dehydratase (195 aa).

Belongs to the imidazoleglycerol-phosphate dehydratase family.

It localises to the cytoplasm. It catalyses the reaction D-erythro-1-(imidazol-4-yl)glycerol 3-phosphate = 3-(imidazol-4-yl)-2-oxopropyl phosphate + H2O. It participates in amino-acid biosynthesis; L-histidine biosynthesis; L-histidine from 5-phospho-alpha-D-ribose 1-diphosphate: step 6/9. The chain is Imidazoleglycerol-phosphate dehydratase from Methylorubrum populi (strain ATCC BAA-705 / NCIMB 13946 / BJ001) (Methylobacterium populi).